The sequence spans 75 residues: ATP synthase subunit c (75 aa).

Transmembrane regions (helical) follow at residues 13-33 and 55-75; these read LSVI…GILF and FIGL…ALII.

This sequence belongs to the ATPase C chain family. F-type ATPases have 2 components, F(1) - the catalytic core - and F(0) - the membrane proton channel. F(1) has five subunits: alpha(3), beta(3), gamma(1), delta(1), epsilon(1). F(0) has three main subunits: a(1), b(2) and c(10-14). The alpha and beta chains form an alternating ring which encloses part of the gamma chain. F(1) is attached to F(0) by a central stalk formed by the gamma and epsilon chains, while a peripheral stalk is formed by the delta and b chains.

Its subcellular location is the cell membrane. In terms of biological role, f(1)F(0) ATP synthase produces ATP from ADP in the presence of a proton or sodium gradient. F-type ATPases consist of two structural domains, F(1) containing the extramembraneous catalytic core and F(0) containing the membrane proton channel, linked together by a central stalk and a peripheral stalk. During catalysis, ATP synthesis in the catalytic domain of F(1) is coupled via a rotary mechanism of the central stalk subunits to proton translocation. Functionally, key component of the F(0) channel; it plays a direct role in translocation across the membrane. A homomeric c-ring of between 10-14 subunits forms the central stalk rotor element with the F(1) delta and epsilon subunits. This Bifidobacterium longum (strain DJO10A) protein is ATP synthase subunit c.